Here is a 263-residue protein sequence, read N- to C-terminus: Phosphate import ATP-binding protein PstB (263 aa).

Positions 16–258 constitute an ABC transporter domain; it reads VTARNVTVSY…PRDTRTQDYI (243 aa). Position 48–55 (48–55) interacts with ATP; the sequence is GPSGCGKS.

This sequence belongs to the ABC transporter superfamily. Phosphate importer (TC 3.A.1.7) family. In terms of assembly, the complex is composed of two ATP-binding proteins (PstB), two transmembrane proteins (PstC and PstA) and a solute-binding protein (PstS).

It is found in the cell inner membrane. It carries out the reaction phosphate(out) + ATP + H2O = ADP + 2 phosphate(in) + H(+). In terms of biological role, part of the ABC transporter complex PstSACB involved in phosphate import. Responsible for energy coupling to the transport system. This chain is Phosphate import ATP-binding protein PstB, found in Maricaulis maris (strain MCS10) (Caulobacter maris).